We begin with the raw amino-acid sequence, 122 residues long: Large ribosomal subunit protein bL12 (122 aa).

This sequence belongs to the bacterial ribosomal protein bL12 family. Homodimer. Part of the ribosomal stalk of the 50S ribosomal subunit. Forms a multimeric L10(L12)X complex, where L10 forms an elongated spine to which 2 to 4 L12 dimers bind in a sequential fashion. Binds GTP-bound translation factors.

In terms of biological role, forms part of the ribosomal stalk which helps the ribosome interact with GTP-bound translation factors. Is thus essential for accurate translation. The protein is Large ribosomal subunit protein bL12 of Buchnera aphidicola subsp. Schizaphis graminum (strain Sg).